Reading from the N-terminus, the 319-residue chain is Olfactory receptor 8U8 (319 aa).

At 1-28 (MAHINCTQATEFILVGLTDHQELKMPLF) the chain is on the extracellular side. A glycan (N-linked (GlcNAc...) asparagine) is linked at N5. A helical membrane pass occupies residues 29–49 (VLFLSIYLFTVVGNLGLILLI). Residues 50–56 (RADTSLN) are Cytoplasmic-facing. The helical transmembrane segment at 57–77 (TPMYFFLSNLAFVDFCYSSVI) threads the bilayer. Residues 78-97 (TPKMLGNFLYKQNVISFDAC) lie on the Extracellular side of the membrane. C97 and C179 are joined by a disulfide. A helical membrane pass occupies residues 98 to 118 (ATQLGCFLTFMVSESLLLASM). The Cytoplasmic portion of the chain corresponds to 119–122 (AYDR). Residues 123 to 143 (YVAICNPLLYMVVMTPGICIQ) form a helical membrane-spanning segment. The Extracellular segment spans residues 144–204 (LVAVPYSYSF…KQLWILACAG (61 aa)). A helical transmembrane segment spans residues 205 to 225 (ITFICSVLIVFVSYMFIIFAI). Topologically, residues 226 to 239 (LRMSSAEGRRKAFS) are cytoplasmic. Residues 240–260 (TCSSHMLAVTIFYGTLIFMYL) traverse the membrane as a helical segment. At 261–271 (QPSSSHSLDAD) the chain is on the extracellular side. A helical transmembrane segment spans residues 272 to 292 (KMASVFYTVIIPMLNPLIYSL). Over 293–319 (RNKDVKDALKKVIINRNHAFIFLKLRK) the chain is Cytoplasmic.

It belongs to the G-protein coupled receptor 1 family.

The protein localises to the cell membrane. Odorant receptor. The sequence is that of Olfactory receptor 8U8 (OR8U8) from Homo sapiens (Human).